Reading from the N-terminus, the 91-residue chain is Histone H1, sperm (91 aa).

The interval 1–25 is disordered; it reads PGSPQKRAASPRKSPRKGSPKKSPM. Positions 9–20 are enriched in basic residues; sequence ASPRKSPRKGSP. In terms of domain architecture, H15 spans 18-91; that stretch reads GSPKKSPMIR…TGATGRFRVG (74 aa).

This sequence belongs to the histone H1/H5 family.

The protein localises to the nucleus. It is found in the chromosome. In terms of biological role, histones H1 are necessary for the condensation of nucleosome chains into higher-order structures. In Sphaerechinus granularis (Purple sea urchin), this protein is Histone H1, sperm.